We begin with the raw amino-acid sequence, 253 residues long: 3-deoxy-manno-octulosonate cytidylyltransferase (253 aa).

Belongs to the KdsB family.

Its subcellular location is the cytoplasm. It catalyses the reaction 3-deoxy-alpha-D-manno-oct-2-ulosonate + CTP = CMP-3-deoxy-beta-D-manno-octulosonate + diphosphate. Its pathway is nucleotide-sugar biosynthesis; CMP-3-deoxy-D-manno-octulosonate biosynthesis; CMP-3-deoxy-D-manno-octulosonate from 3-deoxy-D-manno-octulosonate and CTP: step 1/1. It participates in bacterial outer membrane biogenesis; lipopolysaccharide biosynthesis. Its function is as follows. Activates KDO (a required 8-carbon sugar) for incorporation into bacterial lipopolysaccharide in Gram-negative bacteria. This chain is 3-deoxy-manno-octulosonate cytidylyltransferase, found in Aeromonas hydrophila subsp. hydrophila (strain ATCC 7966 / DSM 30187 / BCRC 13018 / CCUG 14551 / JCM 1027 / KCTC 2358 / NCIMB 9240 / NCTC 8049).